The chain runs to 338 residues: Glycerol-3-phosphate dehydrogenase [NAD(P)+] (338 aa).

Positions 13, 14, and 108 each coordinate NADPH. Sn-glycerol 3-phosphate contacts are provided by Lys-108, Gly-139, and Ser-141. NADPH is bound at residue Ala-143. Residues Lys-194, Asp-247, Ser-257, Arg-258, and Asn-259 each coordinate sn-glycerol 3-phosphate. The active-site Proton acceptor is the Lys-194. NADPH is bound at residue Arg-258. Positions 282 and 284 each coordinate NADPH.

This sequence belongs to the NAD-dependent glycerol-3-phosphate dehydrogenase family.

It is found in the cytoplasm. It carries out the reaction sn-glycerol 3-phosphate + NAD(+) = dihydroxyacetone phosphate + NADH + H(+). The catalysed reaction is sn-glycerol 3-phosphate + NADP(+) = dihydroxyacetone phosphate + NADPH + H(+). The protein operates within membrane lipid metabolism; glycerophospholipid metabolism. Its function is as follows. Catalyzes the reduction of the glycolytic intermediate dihydroxyacetone phosphate (DHAP) to sn-glycerol 3-phosphate (G3P), the key precursor for phospholipid synthesis. This is Glycerol-3-phosphate dehydrogenase [NAD(P)+] from Listeria monocytogenes serotype 4a (strain HCC23).